A 636-amino-acid polypeptide reads, in one-letter code: Threonine--tRNA ligase (636 aa).

The TGS domain maps to 1–63 (MNEINVTLPD…ADGARVEIVT (63 aa)). The catalytic stretch occupies residues 243 to 534 (DHRKLGRELD…LIEHFAGNFP (292 aa)). 3 residues coordinate Zn(2+): cysteine 335, histidine 386, and histidine 511.

It belongs to the class-II aminoacyl-tRNA synthetase family. In terms of assembly, homodimer. Requires Zn(2+) as cofactor.

It localises to the cytoplasm. It carries out the reaction tRNA(Thr) + L-threonine + ATP = L-threonyl-tRNA(Thr) + AMP + diphosphate + H(+). Functionally, catalyzes the attachment of threonine to tRNA(Thr) in a two-step reaction: L-threonine is first activated by ATP to form Thr-AMP and then transferred to the acceptor end of tRNA(Thr). Also edits incorrectly charged L-seryl-tRNA(Thr). The chain is Threonine--tRNA ligase from Geobacter sp. (strain M21).